Reading from the N-terminus, the 921-residue chain is Translation initiation factor IF-2 (921 aa).

The segment at 1 to 296 is disordered; sequence MADNNTPGDK…PGPQKQRGRL (296 aa). A compositionally biased stretch (low complexity) spans 80–89; sequence RPSGPRPGSS. Residues 116–182 show a composition bias toward basic and acidic residues; that stretch reads ARVRDMEERR…AKKRFGEGEA (67 aa). Low complexity predominate over residues 183–257; the sequence is PRPATAAPQQ…LGRAPGVAAG (75 aa). The tr-type G domain occupies 417-586; that stretch reads PRSPVVTVMG…MIALQADILD (170 aa). The interval 426–433 is G1; the sequence is GHVDHGKT. 426 to 433 provides a ligand contact to GTP; it reads GHVDHGKT. Positions 451 to 455 are G2; sequence GITQH. The segment at 474 to 477 is G3; sequence DTPG. Residues 474-478 and 528-531 each bind GTP; these read DTPGH and NKID. Residues 528-531 form a G4 region; it reads NKID. Residues 564-566 form a G5 region; it reads SAK.

The protein belongs to the TRAFAC class translation factor GTPase superfamily. Classic translation factor GTPase family. IF-2 subfamily.

The protein localises to the cytoplasm. One of the essential components for the initiation of protein synthesis. Protects formylmethionyl-tRNA from spontaneous hydrolysis and promotes its binding to the 30S ribosomal subunits. Also involved in the hydrolysis of GTP during the formation of the 70S ribosomal complex. This Bradyrhizobium sp. (strain BTAi1 / ATCC BAA-1182) protein is Translation initiation factor IF-2.